We begin with the raw amino-acid sequence, 585 residues long: MGRIIRVTGPLVVADDMKGAKMYEVVRVGEMGLIGEIIRLEGDKAVIQVYEETAGIRPGEPVEGTGASLSVELGPGLLTAMYDGIQRPLEVLRELSGDFIARGLTAPALPRDKKWHFTPKVKVGDKVVGGDILGVVPETGIIEHRVLVPPWVEGEIVEIVEEGDYTIEEVIAKVKKPNGEIEELKMYHRWPVRVKRPYKRKLPPEVPLITGQRTIDTFFSQAKGGTAAIPGPFGSGKTVTQHQLAKWSDAQVVVYIGCGERGNEMTDVLEEFPKLKDPKTGKPLMERTVLIANTSNMPVAAREASIYTGITIAEYFRDMGYDVALMADSTSRWAEALREISGRLEEMPGEEGYPAYLASKIAEFYERAGRVITLGSDERIGSVSVIGAVSPPGGDFSEPVVQNTLRVVKVFWALDADLARRRHFPAINWLRSYSLYIDSIQDWWHKNVDPEWRAMRDRAMELLQKEAELQEIVRIVGPDALPDREKAVLIVARMLREDYLQQDAFDEVDTYCPPKKQVTMMRVILNFYERTMEAVDRGVPVDEIAKLPVREKIGRMKFEPEIEKVAALIDETNAQFEELFKKYGA.

Position 231-238 (231-238) interacts with ATP; sequence GPFGSGKT.

This sequence belongs to the ATPase alpha/beta chains family. As to quaternary structure, has multiple subunits with at least A(3), B(3), C, D, E, F, H, I and proteolipid K(x).

Its subcellular location is the cell membrane. The enzyme catalyses ATP + H2O + 4 H(+)(in) = ADP + phosphate + 5 H(+)(out). Its function is as follows. Component of the A-type ATP synthase that produces ATP from ADP in the presence of a proton gradient across the membrane. The A chain is the catalytic subunit. This chain is A-type ATP synthase subunit A, found in Thermococcus onnurineus (strain NA1).